The sequence spans 170 residues: MGNEASYPAEMCSHFDNDEIKRLGRRFKKLDLDKSGSLSVEEFMSLPELRHNPLVRRVIDVFDTDGDGEVDFKEFILGTSQFSVKGDEEQKLRFAFSIYDMDKDGYISNGELFQVLKMMVGNNLTDWQLQQLVDKTIIILDKDGDGKISFEEFSAVVRDLEIHKKLVLIV.

G2 carries N-myristoyl glycine lipidation. 4 EF-hand domains span residues 18-46, 50-85, 87-122, and 128-163; these read DEIK…FMSL, RHNP…FSVK, DEEQ…MVGN, and QLQQ…LEIH. Ca(2+) contacts are provided by D31, D33, S35, S37, E42, D63, D65, D67, E69, E74, D100, D102, D104, Y106, and E111. The interval 131 to 136 is calcineurin A binding; that stretch reads QLVDKT. Residues D141, D143, D145, K147, and E152 each coordinate Ca(2+).

The protein belongs to the calcineurin regulatory subunit family. In terms of assembly, forms a complex composed of a calmodulin-dependent catalytic subunit (also known as calcineurin A) and a regulatory Ca(2+)-binding subunit (also known as calcineurin B). There are three catalytic subunits, each encoded by a separate gene (PPP3CA, PPP3CB, and PPP3CC) and two regulatory subunits which are also encoded by separate genes (PPP3R1 and PPP3R2). Interacts with SPATA33 (via PQIIIT motif). As to expression, testis-specific.

It is found in the mitochondrion. In terms of biological role, regulatory subunit of calcineurin, a calcium-dependent, calmodulin stimulated protein phosphatase. Confers calcium sensitivity. This Homo sapiens (Human) protein is Calcineurin subunit B type 2 (PPP3R2).